The primary structure comprises 60 residues: Large ribosomal subunit protein bL32 (60 aa).

The protein belongs to the bacterial ribosomal protein bL32 family.

This chain is Large ribosomal subunit protein bL32, found in Clostridium acetobutylicum (strain ATCC 824 / DSM 792 / JCM 1419 / IAM 19013 / LMG 5710 / NBRC 13948 / NRRL B-527 / VKM B-1787 / 2291 / W).